The primary structure comprises 640 residues: Probable potassium transport system protein Kup (640 aa).

Helical transmembrane passes span 26 to 46 (IAGL…TSPL), 69 to 89 (ILSL…VLFI), 117 to 137 (AWVL…DGMI), 155 to 175 (PAFR…LFVI), 186 to 206 (IFGP…IAGI), 224 to 244 (FFAD…LAIT), 265 to 285 (WFLV…ALIL), 297 to 317 (LLVP…ATII), 355 to 375 (IYVP…VVGF), 384 to 404 (AYGI…FVVV), 415 to 435 (AGLF…ATTV), and 437 to 457 (ILAG…LLTT).

This sequence belongs to the HAK/KUP transporter (TC 2.A.72) family.

It is found in the cell inner membrane. The enzyme catalyses K(+)(in) + H(+)(in) = K(+)(out) + H(+)(out). Its function is as follows. Transport of potassium into the cell. Likely operates as a K(+):H(+) symporter. The protein is Probable potassium transport system protein Kup of Aromatoleum aromaticum (strain DSM 19018 / LMG 30748 / EbN1) (Azoarcus sp. (strain EbN1)).